Here is a 256-residue protein sequence, read N- to C-terminus: Probable ATP-dependent transporter slr0075 (256 aa).

Residues 6 to 250 (LSIKNLTASV…EEKGYDFLDE (245 aa)) enclose the ABC transporter domain. 38–45 (GRNGSGKS) provides a ligand contact to ATP.

It belongs to the ABC transporter superfamily. Ycf16 family.

In Synechocystis sp. (strain ATCC 27184 / PCC 6803 / Kazusa), this protein is Probable ATP-dependent transporter slr0075.